The chain runs to 733 residues: Hypermethylated in cancer 1 protein (733 aa).

The BTB domain maps to 47 to 110; sequence CDVIIVVQNA…IYTGRLTDSV (64 aa). Positions 154 to 315 are mediates HDAC-dependent transcriptional repression; it reads KYCHLRGGGS…PFRGSGGSPG (162 aa). Arginine 159 carries the post-translational modification Omega-N-methylarginine. Residues 189-209 are disordered; sequence YSSPAGPPPPPAAEPPSGPDA. The segment covering 193 to 206 has biased composition (pro residues); that stretch reads AGPPPPPAAEPPSG. Position 237 is a phosphoserine (serine 237). An interaction with CTBP1 region spans residues 241-247; it reads GLDLSKK. The interval 241-421 is disordered; the sequence is GLDLSKKSPP…PGGHLEGYPC (181 aa). A Phosphoserine modification is found at serine 248. An N6-acetyllysine; alternate modification is found at lysine 333. Lysine 333 participates in a covalent cross-link: Glycyl lysine isopeptide (Lys-Gly) (interchain with G-Cter in SUMO); alternate. The span at 344 to 361 shows a compositional bias: basic and acidic residues; it reads ELVRDRGSPGERLEERGG. A Phosphoserine modification is found at serine 366. Residues 368 to 380 are compositionally biased toward pro residues; sequence GGPPLGLVPPPRY. C2H2-type zinc fingers lie at residues 437-464, 507-534, 535-562, 563-590, and 591-618; these read YVCIPCGKGFPSSEQLNAHVEAHVEEEE, YRCASCDKSYKDPATLRQHEKTHWLTRP, YPCTICGKKFTQRGTMTRHMRSHLGLKP, FACDACGMRFTRQYRLTEHMRIHSGEKP, and YECQVCGGKFAQQRNLISHMKMHAVGGA. Residue serine 704 is modified to Phosphoserine.

Belongs to the krueppel C2H2-type zinc-finger protein family. Hic subfamily. As to quaternary structure, self-associates. Interacts with HIC2. Interacts with CTBP1 and CTBP2. Interacts with TCF7L2 and ARID1A. Interacts with MTA1 and MBD3; indicative for an association with the NuRD complex. Interacts with SIRT1. Acetylated on several residues, including Lys-333. Lys-333 is deacetylated by SIRT1. In terms of processing, sumoylated on Lys-333 by a PIAS family member, which enhances interaction with MTA1, positively regulates transcriptional repression activity and is enhanced by HDAC4. In terms of tissue distribution, ubiquitously expressed with highest levels in heart and lung.

Its subcellular location is the nucleus. Functionally, transcriptional repressor. Recognizes and binds to the consensus sequence '5-[CG]NG[CG]GGGCA[CA]CC-3'. May act as a tumor suppressor. Involved in development of head, face, limbs and ventral body wall. Involved in down-regulation of SIRT1 and thereby is involved in regulation of p53/TP53-dependent apoptotic DNA-damage responses. The specific target gene promoter association seems to be depend on corepressors, such as CTBP1 or CTBP2 and MTA1. In cooperation with MTA1 (indicative for an association with the NuRD complex) represses transcription from CCND1/cyclin-D1 and CDKN1C/p57Kip2 specifically in quiescent cells. Involved in regulation of the Wnt signaling pathway probably by association with TCF7L2 and preventing TCF7L2 and CTNNB1 association with promoters of TCF-responsive genes. Seems to repress transcription from E2F1 and ATOH1 which involves ARID1A, indicative for the participation of a distinct SWI/SNF-type chromatin-remodeling complex. Probably represses transcription from ACKR3, FGFBP1 and EFNA1. The polypeptide is Hypermethylated in cancer 1 protein (Hic1) (Mus musculus (Mouse)).